The sequence spans 203 residues: Holliday junction branch migration complex subunit RuvA (203 aa).

The tract at residues 1-63 (MIGQLSGKVD…EEHIHLYGFL (63 aa)) is domain I. The tract at residues 64–142 (TLEEKIFFNL…KISSGSAIIK (79 aa)) is domain II. A flexible linker region spans residues 143–149 (ESLNIKN). Residues 150 to 203 (ITPVASNEVIKALVNLGFSRFEAQNAVQGIITQNPEISIDELIKTALKNRNSNF) form a domain III region.

It belongs to the RuvA family. As to quaternary structure, homotetramer. Forms an RuvA(8)-RuvB(12)-Holliday junction (HJ) complex. HJ DNA is sandwiched between 2 RuvA tetramers; dsDNA enters through RuvA and exits via RuvB. An RuvB hexamer assembles on each DNA strand where it exits the tetramer. Each RuvB hexamer is contacted by two RuvA subunits (via domain III) on 2 adjacent RuvB subunits; this complex drives branch migration. In the full resolvosome a probable DNA-RuvA(4)-RuvB(12)-RuvC(2) complex forms which resolves the HJ.

The protein localises to the cytoplasm. Functionally, the RuvA-RuvB-RuvC complex processes Holliday junction (HJ) DNA during genetic recombination and DNA repair, while the RuvA-RuvB complex plays an important role in the rescue of blocked DNA replication forks via replication fork reversal (RFR). RuvA specifically binds to HJ cruciform DNA, conferring on it an open structure. The RuvB hexamer acts as an ATP-dependent pump, pulling dsDNA into and through the RuvAB complex. HJ branch migration allows RuvC to scan DNA until it finds its consensus sequence, where it cleaves and resolves the cruciform DNA. This chain is Holliday junction branch migration complex subunit RuvA, found in Rickettsia conorii (strain ATCC VR-613 / Malish 7).